The sequence spans 418 residues: Perilipin-1 homolog (418 aa).

Residues 211-275 (LTIGQRVKNL…EKKTWVIEKS (65 aa)) are required for lipid droplet localization.

It belongs to the perilipin family. In terms of tissue distribution, expressed in intestinal and epidermal cells. Expressed in the muscle and hypodermis.

It localises to the lipid droplet. Its function is as follows. Lipid droplet-associated protein which plays a role in lipid droplet clustering. The protein is Perilipin-1 homolog of Caenorhabditis elegans.